The primary structure comprises 432 residues: Adenosine 3'-phospho 5'-phosphosulfate transporter 1 (432 aa).

9 consecutive transmembrane segments (helical) span residues 5–25, 40–60, 109–129, 154–174, 238–258, 265–285, 299–319, 353–373, and 387–407; these read WWAV…ETPE, VVNA…VQYF, ALKL…WGVL, FLVL…CVLC, WEYL…LSSG, PATT…DSFT, SVQM…GSLL, LFIF…IMTL, and GHTV…ALLL. A Phosphoserine modification is found at Ser427.

Belongs to the nucleotide-sugar transporter family. SLC35B subfamily.

It localises to the golgi apparatus membrane. It carries out the reaction 3'-phosphoadenylyl sulfate(in) + adenosine 3',5'-bisphosphate(out) = 3'-phosphoadenylyl sulfate(out) + adenosine 3',5'-bisphosphate(in). Probably functions as a 3'-phosphoadenylyl sulfate:adenosine 3',5'-bisphosphate antiporter at the Golgi membranes. Mediates the transport from the cytosol into the lumen of the Golgi of 3'-phosphoadenylyl sulfate/adenosine 3'-phospho 5'-phosphosulfate (PAPS), a universal sulfuryl donor for sulfation events that take place in that compartment. This is Adenosine 3'-phospho 5'-phosphosulfate transporter 1 from Pongo abelii (Sumatran orangutan).